Consider the following 698-residue polypeptide: Sialic acid-binding Ig-like lectin 11 (698 aa).

The first 27 residues, 1–27, serve as a signal peptide directing secretion; the sequence is MVPGQAQPQSPEMLLLPLLLPVLGAGS. Residues 28–561 lie on the Extracellular side of the membrane; the sequence is LNKDPSYSLQ…KLEHGGGLGL (534 aa). The Ig-like V-type domain occupies 31 to 134; that stretch reads DPSYSLQVQR…DEAWYFFRVE (104 aa). 3 disulfide bridges follow: Cys49-Cys186, Cys54-Cys114, and Cys177-Cys228. N-linked (GlcNAc...) asparagine glycans are attached at residues Asn55 and Asn90. Residue Arg132 coordinates N-acetylneuraminate. Ig-like C2-type domains follow at residues 159–244, 251–350, and 355–452; these read PDVY…RTVR, PKDL…LDLS, and PENL…LSLS. Asn262 carries N-linked (GlcNAc...) asparagine glycosylation. A disulfide bridge links Cys287 with Cys334. Asn366 and Asn375 each carry an N-linked (GlcNAc...) asparagine glycan. Cysteines 391 and 436 form a disulfide. 2 N-linked (GlcNAc...) asparagine glycosylation sites follow: Asn497 and Asn515. A helical transmembrane segment spans residues 562-584; sequence GAALGAGVAALLAFCSCLVVFRV. Topologically, residues 585-698 are cytoplasmic; sequence KICRKEARKR…EREMSGMVPK (114 aa). The tract at residues 596 to 635 is disordered; that stretch reads AAEQDVPSTLGPISQGHQHECSAGSSQDHPPPGAATYTPG. The ITIM motif motif lies at 642-647; it reads LHYASL. Tyr668 is subject to Phosphotyrosine. The interval 675–698 is disordered; that stretch reads TGQPLRGPGFGLQLEREMSGMVPK.

This sequence belongs to the immunoglobulin superfamily. SIGLEC (sialic acid binding Ig-like lectin) family. As to quaternary structure, interacts with PTPN6/SHP-1 and PTPN11/SHP-2 upon phosphorylation. Post-translationally, phosphorylated on tyrosine residues. As to expression, expressed by macrophages in various tissues including Kupffer cells. Also found in brain microglia.

The protein localises to the membrane. Functionally, putative adhesion molecule that mediates sialic-acid dependent binding to cells. Preferentially binds to alpha-2,8-linked sialic acid. The sialic acid recognition site may be masked by cis interactions with sialic acids on the same cell surface. In the immune response, may act as an inhibitory receptor upon ligand induced tyrosine phosphorylation by recruiting cytoplasmic phosphatase(s) via their SH2 domain(s) that block signal transduction through dephosphorylation of signaling molecules. The sequence is that of Sialic acid-binding Ig-like lectin 11 (SIGLEC11) from Homo sapiens (Human).